A 291-amino-acid polypeptide reads, in one-letter code: Bifunctional protein FolD (291 aa).

Residues 171 to 173 (GVS) and isoleucine 239 each bind NADP(+).

It belongs to the tetrahydrofolate dehydrogenase/cyclohydrolase family. In terms of assembly, homodimer.

It catalyses the reaction (6R)-5,10-methylene-5,6,7,8-tetrahydrofolate + NADP(+) = (6R)-5,10-methenyltetrahydrofolate + NADPH. The catalysed reaction is (6R)-5,10-methenyltetrahydrofolate + H2O = (6R)-10-formyltetrahydrofolate + H(+). It functions in the pathway one-carbon metabolism; tetrahydrofolate interconversion. Its function is as follows. Catalyzes the oxidation of 5,10-methylenetetrahydrofolate to 5,10-methenyltetrahydrofolate and then the hydrolysis of 5,10-methenyltetrahydrofolate to 10-formyltetrahydrofolate. This chain is Bifunctional protein FolD, found in Xylella fastidiosa (strain Temecula1 / ATCC 700964).